Reading from the N-terminus, the 320-residue chain is MIKKIGVLTSGGDSPGMNAAIRGVVRAGLSEGLEVYGIYDGYLGLFQDRIAKLDRYSVSDMINRGGTFLGSARFPEFREEGTRAIAIENMTKRGLDALVVIGGDGSYMGAKRLTEMGFPCIGLPGTIDNDVAGTDYTIGYFTALETVVEAIDRLRDTSTSHQRISIVEVMGRYCGDLTMAAAIAGGCEFIVLPEVEFKPEDLVYEIKAGIAKGKKHAIVAITEYICNVAELAQYIEKETGRETRATVLGHIQRGGRPVAYDRILASLMGAYSIELLLQGYGGRCVGVQNERLVHHDIVDAIENMKRPFRSNILETAKKLF.

G12 provides a ligand contact to ATP. ADP contacts are provided by residues 22-26 (RGVVR) and 55-60 (RYSVSD). Residues 73-74 (RF) and 103-106 (GDGS) each bind ATP. Residue D104 coordinates Mg(2+). 126–128 (TID) contributes to the substrate binding site. Residue D128 is the Proton acceptor of the active site. Residue R155 participates in ADP binding. Residues R163 and 170–172 (MGR) contribute to the substrate site. ADP contacts are provided by residues 186–188 (GCE), K212, and 214–216 (KKH). Residues E223, R244, and 250-253 (HIQR) contribute to the substrate site.

Belongs to the phosphofructokinase type A (PFKA) family. ATP-dependent PFK group I subfamily. Prokaryotic clade 'B1' sub-subfamily. Homotetramer. Requires Mg(2+) as cofactor.

Its subcellular location is the cytoplasm. It carries out the reaction beta-D-fructose 6-phosphate + ATP = beta-D-fructose 1,6-bisphosphate + ADP + H(+). The protein operates within carbohydrate degradation; glycolysis; D-glyceraldehyde 3-phosphate and glycerone phosphate from D-glucose: step 3/4. Allosterically activated by ADP and other diphosphonucleosides, and allosterically inhibited by phosphoenolpyruvate. Its function is as follows. Catalyzes the phosphorylation of D-fructose 6-phosphate to fructose 1,6-bisphosphate by ATP, the first committing step of glycolysis. The chain is ATP-dependent 6-phosphofructokinase from Sodalis glossinidius (strain morsitans).